Reading from the N-terminus, the 277-residue chain is Large ribosomal subunit protein uL2c (277 aa).

Positions 228–254 (VDHPHGGGEGRCPVGHAQPRTPWGKPA) are disordered.

This sequence belongs to the universal ribosomal protein uL2 family. Part of the 50S ribosomal subunit.

The protein localises to the plastid. It localises to the chloroplast. This Ostreococcus tauri protein is Large ribosomal subunit protein uL2c (rpl2).